A 323-amino-acid chain; its full sequence is Putative gluconeogenesis factor (323 aa).

It belongs to the gluconeogenesis factor family.

It is found in the cytoplasm. Its function is as follows. Required for morphogenesis under gluconeogenic growth conditions. This is Putative gluconeogenesis factor from Thermoanaerobacterium thermosulfurigenes (Clostridium thermosulfurogenes).